The primary structure comprises 828 residues: DNA topoisomerase 3 (828 aa).

The Toprim domain occupies Arg-4–Ser-149. A Topo IA-type catalytic domain is found at Asn-167–Tyr-617. Residue Tyr-361 is the O-(5'-phospho-DNA)-tyrosine intermediate of the active site. Positions Gln-763 to Phe-828 are disordered.

This sequence belongs to the type IA topoisomerase family.

The catalysed reaction is ATP-independent breakage of single-stranded DNA, followed by passage and rejoining.. Releases the supercoiling and torsional tension of DNA introduced during the DNA replication and transcription by transiently cleaving and rejoining one strand of the DNA duplex. Introduces a single-strand break via transesterification at a target site in duplex DNA. The scissile phosphodiester is attacked by the catalytic tyrosine of the enzyme, resulting in the formation of a DNA-(5'-phosphotyrosyl)-enzyme intermediate and the expulsion of a 3'-OH DNA strand. The free DNA strand than undergoes passage around the unbroken strand thus removing DNA supercoils. Finally, in the religation step, the DNA 3'-OH attacks the covalent intermediate to expel the active-site tyrosine and restore the DNA phosphodiester backbone. The sequence is that of DNA topoisomerase 3 (top3) from Dictyostelium discoideum (Social amoeba).